The primary structure comprises 478 residues: Dihydrolipoyl dehydrogenase (478 aa).

Residues 36–45 (ERYSTLGGVC), Lys54, and Ala117 contribute to the FAD site. The cysteines at positions 45 and 50 are disulfide-linked. Residues 183 to 187 (GGGII), Glu206, Val239, and 270 to 273 (AIGR) each bind NAD(+). FAD contacts are provided by Asp313 and Ala321. His445 serves as the catalytic Proton acceptor.

Belongs to the class-I pyridine nucleotide-disulfide oxidoreductase family. In terms of assembly, homodimer. Requires FAD as cofactor.

The protein resides in the cytoplasm. It carries out the reaction N(6)-[(R)-dihydrolipoyl]-L-lysyl-[protein] + NAD(+) = N(6)-[(R)-lipoyl]-L-lysyl-[protein] + NADH + H(+). Its function is as follows. Lipoamide dehydrogenase is a component of the alpha-ketoacid dehydrogenase complexes. This is Dihydrolipoyl dehydrogenase (lpdA) from Haemophilus influenzae (strain ATCC 51907 / DSM 11121 / KW20 / Rd).